The sequence spans 505 residues: Trans-cinnamate 4-monooxygenase (505 aa).

Residues 3–23 form a helical membrane-spanning segment; it reads LLLLEKTLLGLFLAAVVAIVV. (E)-cinnamate is bound by residues 213–218 and alanine 306; that span reads RSRLAQ. Cysteine 447 contacts heme.

This sequence belongs to the cytochrome P450 family. Heme serves as cofactor.

The protein resides in the membrane. It catalyses the reaction (E)-cinnamate + reduced [NADPH--hemoprotein reductase] + O2 = (E)-4-coumarate + oxidized [NADPH--hemoprotein reductase] + H2O + H(+). It functions in the pathway phenylpropanoid metabolism; trans-4-coumarate biosynthesis; trans-4-coumarate from trans-cinnamate: step 1/1. Its function is as follows. Catalyzes the first oxidative step of the phenylpropanoid pathway in higher plants by transforming trans-cinnamate into p-coumarate. The compounds formed by this pathway are essential components for lignification, pollination, and defense against ultraviolet light, predators and pathogens. This Vigna radiata var. radiata (Mung bean) protein is Trans-cinnamate 4-monooxygenase (CYP73A2).